Consider the following 809-residue polypeptide: Phenylalanine--tRNA ligase beta subunit (809 aa).

Positions 39 to 152 constitute a tRNA-binding domain; it reads KDKWPNVYVG…ADAPVGMLAS (114 aa). In terms of domain architecture, B5 spans 404–492; it reads KDRNSVVLSL…RIAGYDTIPC (89 aa). Residues D470, D476, E479, and E480 each coordinate Mg(2+). An FDX-ACB domain is found at 717–808; it reads NRFPSVERDL…LNTETGAVLR (92 aa).

The protein belongs to the phenylalanyl-tRNA synthetase beta subunit family. Type 1 subfamily. As to quaternary structure, tetramer of two alpha and two beta subunits. Mg(2+) serves as cofactor.

It is found in the cytoplasm. The enzyme catalyses tRNA(Phe) + L-phenylalanine + ATP = L-phenylalanyl-tRNA(Phe) + AMP + diphosphate + H(+). The protein is Phenylalanine--tRNA ligase beta subunit of Dehalococcoides mccartyi (strain ATCC BAA-2266 / KCTC 15142 / 195) (Dehalococcoides ethenogenes (strain 195)).